A 130-amino-acid chain; its full sequence is Small ribosomal subunit protein uS9 (130 aa).

It belongs to the universal ribosomal protein uS9 family.

This is Small ribosomal subunit protein uS9 from Paraburkholderia phymatum (strain DSM 17167 / CIP 108236 / LMG 21445 / STM815) (Burkholderia phymatum).